Reading from the N-terminus, the 498-residue chain is Lysine--tRNA ligase (498 aa).

Mg(2+) is bound by residues glutamate 401 and glutamate 408.

Belongs to the class-II aminoacyl-tRNA synthetase family. As to quaternary structure, homodimer. Mg(2+) is required as a cofactor.

Its subcellular location is the cytoplasm. It carries out the reaction tRNA(Lys) + L-lysine + ATP = L-lysyl-tRNA(Lys) + AMP + diphosphate. The sequence is that of Lysine--tRNA ligase from Dehalococcoides mccartyi (strain ATCC BAA-2266 / KCTC 15142 / 195) (Dehalococcoides ethenogenes (strain 195)).